A 258-amino-acid chain; its full sequence is Large ribosomal subunit protein uL3 (258 aa).

Belongs to the universal ribosomal protein uL3 family. Part of the 50S ribosomal subunit. Forms a cluster with proteins L14 and L19.

Its function is as follows. One of the primary rRNA binding proteins, it binds directly near the 3'-end of the 23S rRNA, where it nucleates assembly of the 50S subunit. The chain is Large ribosomal subunit protein uL3 from Spiroplasma kunkelii.